The following is a 173-amino-acid chain: Mesencephalic astrocyte-derived neurotrophic factor homolog (173 aa).

A signal peptide spans 1–22 (MKTTHLVLVLCFLAGVAQTTLA). 4 disulfides stabilise this stretch: Cys-28–Cys-114, Cys-31–Cys-103, Cys-61–Cys-72, and Cys-148–Cys-151.

This sequence belongs to the ARMET family.

It is found in the secreted. Required during the maturation of the embryonic nervous system for maintenance of neuronal and cuticular connectivity. Essential for maintenance of dopaminergic neurons and dopamine levels. The protein is Mesencephalic astrocyte-derived neurotrophic factor homolog of Drosophila persimilis (Fruit fly).